We begin with the raw amino-acid sequence, 216 residues long: Putative holocytochrome-c1 synthase (216 aa).

The interval 1–46 (MQPEQLNQEEESKCPVPPEVRDAWLKSHGGKKPSEVHDTPHPTMLP) is disordered.

This sequence belongs to the cytochrome c-type heme lyase family.

The protein resides in the mitochondrion inner membrane. The catalysed reaction is holo-[cytochrome c] = apo-[cytochrome c] + heme b. In terms of biological role, lyase that catalyzes the covalent linking of the heme group to the cytochrome C1 apoprotein to produce the mature functional cytochrome. This is Putative holocytochrome-c1 synthase from Schizosaccharomyces pombe (strain 972 / ATCC 24843) (Fission yeast).